Reading from the N-terminus, the 429-residue chain is uncharacterized protein (429 aa).

10 helical membrane-spanning segments follow: residues 26-46 (VALTGAAAVVVLPVITSHDIF), 51-71 (TGIDWDVIFLLVGMMIIVGVL), 99-119 (LVLVSALASALLDNVTTVLLI), 135-155 (TSFLMAEVFASNIGGAATLVG), 173-193 (FMLHLTPLVVIVLIALIAVLP), 223-243 (LLVKCGAVLVLVFAAFVAHPV), 278-298 (TLLFFAGLFIMVGALVKTGVV), 311-331 (GNIVATAFLILGVSAPISGII), 361-381 (WWALALGADFGGNLTAIGASA), and 407-427 (VVTAVSIALAAIYLWLRYFVL).

The protein belongs to the CitM (TC 2.A.11) transporter family.

Its subcellular location is the cell membrane. This is an uncharacterized protein from Mycobacterium tuberculosis (strain ATCC 25618 / H37Rv).